Here is a 333-residue protein sequence, read N- to C-terminus: Methionyl-tRNA formyltransferase (333 aa).

106 to 109 contributes to the (6S)-5,6,7,8-tetrahydrofolate binding site; that stretch reads SLLP.

The protein belongs to the Fmt family.

The enzyme catalyses L-methionyl-tRNA(fMet) + (6R)-10-formyltetrahydrofolate = N-formyl-L-methionyl-tRNA(fMet) + (6S)-5,6,7,8-tetrahydrofolate + H(+). Attaches a formyl group to the free amino group of methionyl-tRNA(fMet). The formyl group appears to play a dual role in the initiator identity of N-formylmethionyl-tRNA by promoting its recognition by IF2 and preventing the misappropriation of this tRNA by the elongation apparatus. In Elusimicrobium minutum (strain Pei191), this protein is Methionyl-tRNA formyltransferase.